Consider the following 102-residue polypeptide: Neuropeptide F (102 aa).

The first 29 residues, 1-29 (MSNTMRCILIVCVALTLIAAGCNVEASNS), serve as a signal peptide directing secretion. Residues 30-32 (RPP) constitute a propeptide that is removed on maturation. The residue at position 62 (Phe-62) is a Phenylalanine amide. Residues 66–102 (GGPLMEMLRNRELENNMAKSINSGGELIRALDEEEVF) constitute a propeptide that is removed on maturation.

It belongs to the NPY family.

It localises to the secreted. In terms of biological role, an integral part of the sensory system that mediates food signaling, providing the neural basis for the regulation of food response; coordinates larval foraging and social behavior changes during development. May have a hormonal role in females. The polypeptide is Neuropeptide F (Drosophila pseudoobscura pseudoobscura (Fruit fly)).